A 260-amino-acid polypeptide reads, in one-letter code: Thiazole synthase (260 aa).

Lys96 functions as the Schiff-base intermediate with DXP in the catalytic mechanism. Residues Gly157, 183–184, and 205–206 contribute to the 1-deoxy-D-xylulose 5-phosphate site; these read AG and AS.

Belongs to the ThiG family. Homotetramer. Forms heterodimers with either ThiH or ThiS.

Its subcellular location is the cytoplasm. It catalyses the reaction [ThiS sulfur-carrier protein]-C-terminal-Gly-aminoethanethioate + 2-iminoacetate + 1-deoxy-D-xylulose 5-phosphate = [ThiS sulfur-carrier protein]-C-terminal Gly-Gly + 2-[(2R,5Z)-2-carboxy-4-methylthiazol-5(2H)-ylidene]ethyl phosphate + 2 H2O + H(+). It functions in the pathway cofactor biosynthesis; thiamine diphosphate biosynthesis. In terms of biological role, catalyzes the rearrangement of 1-deoxy-D-xylulose 5-phosphate (DXP) to produce the thiazole phosphate moiety of thiamine. Sulfur is provided by the thiocarboxylate moiety of the carrier protein ThiS. In vitro, sulfur can be provided by H(2)S. The chain is Thiazole synthase from Corynebacterium glutamicum (strain ATCC 13032 / DSM 20300 / JCM 1318 / BCRC 11384 / CCUG 27702 / LMG 3730 / NBRC 12168 / NCIMB 10025 / NRRL B-2784 / 534).